Here is a 155-residue protein sequence, read N- to C-terminus: Transcriptional repressor NrdR (155 aa).

The segment at 3–34 is a zinc-finger region; that stretch reads CPFCGNIDTQVKDSRPAEDHVSIRRRRFCPAC. Residues 49–139 enclose the ATP-cone domain; the sequence is LVVIKSTGKR…VYKNFQAADD (91 aa).

Belongs to the NrdR family. Requires Zn(2+) as cofactor.

Negatively regulates transcription of bacterial ribonucleotide reductase nrd genes and operons by binding to NrdR-boxes. The sequence is that of Transcriptional repressor NrdR from Roseobacter denitrificans (strain ATCC 33942 / OCh 114) (Erythrobacter sp. (strain OCh 114)).